Reading from the N-terminus, the 370-residue chain is Glucan endo-1,3-beta-glucosidase (370 aa).

The first 32 residues, 1-32 (MASFFARTRRFSLVSLFLLELFTINLIPTTDA), serve as a signal peptide directing secretion. A Pyrrolidone carboxylic acid modification is found at Q33. Residue E127 is the Proton donor of the active site. The active-site Nucleophile is the E272. Residues 348 to 370 (GERRDGEIVEGDFNGTVSLKSDM) constitute a propeptide, removed in mature form. A glycan (N-linked (GlcNAc...) asparagine) is linked at N361.

This sequence belongs to the glycosyl hydrolase 17 family. Constitutively expressed in seedling roots.

The catalysed reaction is Hydrolysis of (1-&gt;3)-beta-D-glucosidic linkages in (1-&gt;3)-beta-D-glucans.. In terms of biological role, implicated in the defense of plants against pathogens. This Pisum sativum (Garden pea) protein is Glucan endo-1,3-beta-glucosidase.